Here is a 181-residue protein sequence, read N- to C-terminus: Protein GrpE (181 aa).

Polar residues predominate over residues 1-13 (MENTQENPATQSA). The interval 1-39 (MENTQENPATQSAEDIGSEKQAAQGAAPAAEAADAALAE) is disordered. Low complexity predominate over residues 21–39 (QAAQGAAPAAEAADAALAE).

Belongs to the GrpE family. In terms of assembly, homodimer.

It localises to the cytoplasm. In terms of biological role, participates actively in the response to hyperosmotic and heat shock by preventing the aggregation of stress-denatured proteins, in association with DnaK and GrpE. It is the nucleotide exchange factor for DnaK and may function as a thermosensor. Unfolded proteins bind initially to DnaJ; upon interaction with the DnaJ-bound protein, DnaK hydrolyzes its bound ATP, resulting in the formation of a stable complex. GrpE releases ADP from DnaK; ATP binding to DnaK triggers the release of the substrate protein, thus completing the reaction cycle. Several rounds of ATP-dependent interactions between DnaJ, DnaK and GrpE are required for fully efficient folding. In Burkholderia lata (strain ATCC 17760 / DSM 23089 / LMG 22485 / NCIMB 9086 / R18194 / 383), this protein is Protein GrpE.